The sequence spans 449 residues: D-inositol 3-phosphate glycosyltransferase (449 aa).

1D-myo-inositol 3-phosphate is bound at residue H43. UDP-N-acetyl-alpha-D-glucosamine-binding positions include 49–50 and G57; that span reads QP. 1D-myo-inositol 3-phosphate contacts are provided by residues 54–59, K112, Y145, T169, and R189; that span reads DAGGMN. Residues R263, K268, and Q324 each contribute to the UDP-N-acetyl-alpha-D-glucosamine site. Mg(2+) contacts are provided by Y333, R334, and A336. UDP-N-acetyl-alpha-D-glucosamine is bound by residues E346 and E354. Position 360 (T360) interacts with Mg(2+).

Belongs to the glycosyltransferase group 1 family. MshA subfamily. Homodimer.

It carries out the reaction 1D-myo-inositol 3-phosphate + UDP-N-acetyl-alpha-D-glucosamine = 1D-myo-inositol 2-acetamido-2-deoxy-alpha-D-glucopyranoside 3-phosphate + UDP + H(+). Its function is as follows. Catalyzes the transfer of a N-acetyl-glucosamine moiety to 1D-myo-inositol 3-phosphate to produce 1D-myo-inositol 2-acetamido-2-deoxy-glucopyranoside 3-phosphate in the mycothiol biosynthesis pathway. The protein is D-inositol 3-phosphate glycosyltransferase of Segniliparus rotundus (strain ATCC BAA-972 / CDC 1076 / CIP 108378 / DSM 44985 / JCM 13578).